Reading from the N-terminus, the 123-residue chain is Cliotide T12 (123 aa).

Residues 1–28 (MASLRIAPLALFFFLAASVMFTVEKTEA) form the signal peptide. A cross-link (cyclopeptide (Gly-Asp)) is located at residues 29–58 (GIPCGESCVFIPCITGAIGCSCKSKVCYRD). 3 disulfide bridges follow: Cys-32/Cys-48, Cys-36/Cys-50, and Cys-41/Cys-55. The propeptide at 59-123 (HVIAAEAKTM…KDHLKMSVPN (65 aa)) is removed in mature form.

Contains 3 disulfide bonds. Post-translationally, this is a cyclic peptide.

In terms of biological role, probably participates in a plant defense mechanism. The chain is Cliotide T12 from Clitoria ternatea (Butterfly pea).